A 292-amino-acid polypeptide reads, in one-letter code: Putative ribonuclease 3 (292 aa).

Residues 32 to 158 (LGMSDEYIPY…FFGATEWLID (127 aa)) enclose the RNase III domain. The DRBM domain occupies 204-276 (DAKTRFNEVI…ASRALETLAL (73 aa)).

Belongs to the IIV-6 142R family.

The catalysed reaction is Endonucleolytic cleavage to 5'-phosphomonoester.. Its function is as follows. Digests double-stranded RNA. This is Putative ribonuclease 3 from Acheta domesticus (House cricket).